The sequence spans 137 residues: Ribosome-binding factor A (137 aa).

It belongs to the RbfA family. In terms of assembly, monomer. Binds 30S ribosomal subunits, but not 50S ribosomal subunits or 70S ribosomes.

It is found in the cytoplasm. In terms of biological role, one of several proteins that assist in the late maturation steps of the functional core of the 30S ribosomal subunit. Associates with free 30S ribosomal subunits (but not with 30S subunits that are part of 70S ribosomes or polysomes). Required for efficient processing of 16S rRNA. May interact with the 5'-terminal helix region of 16S rRNA. The sequence is that of Ribosome-binding factor A from Cereibacter sphaeroides (strain KD131 / KCTC 12085) (Rhodobacter sphaeroides).